Consider the following 381-residue polypeptide: O-antigen chain mannosyltransferase B (381 aa).

This sequence belongs to the glycosyltransferase group 1 family. Glycosyltransferase 4 subfamily.

It catalyses the reaction alpha-D-mannosyl-(1-&gt;3)-N-acetyl-alpha-D-glucosaminyl-di-trans,octa-cis-undecaprenyl diphosphate + 2 GDP-alpha-D-mannose = alpha-D-mannosyl-(1-&gt;3)-alpha-D-mannosyl-(1-&gt;3)-alpha-D-mannosyl-(1-&gt;3)-N-acetyl-alpha-D-glucosaminyl-di-trans,octa-cis-undecaprenyl diphosphate + 2 GDP + 2 H(+). It participates in bacterial outer membrane biogenesis; LPS O-antigen biosynthesis. Its function is as follows. Mannosyltransferase involved in the biosynthesis of the repeat unit of the lipopolysaccharide (LPS) O-antigen region. Catalyzes the transfer of two alpha-(1-&gt;3)-linked mannose residues to the product of the WbdC enzyme during the synthesis of the adapter region. In Escherichia coli, this protein is O-antigen chain mannosyltransferase B.